A 650-amino-acid polypeptide reads, in one-letter code: Epithelial sodium channel subunit beta (650 aa).

Residues 1 to 95 (MLLHINPAYL…IICEGPKKKA (95 aa)) lie on the Cytoplasmic side of the membrane. Residues 96-116 (MWFLLTLLFTALVCWQWGIFI) traverse the membrane as a helical segment. Residues 117-542 (RTYLSWEVSV…GGQFGFWMGG (426 aa)) lie on the Extracellular side of the membrane. Disulfide bonds link Cys-143–Cys-317, Cys-229–Cys-234, Cys-241–Cys-248, Cys-294–Cys-301, and Cys-406–Cys-458. Residue Asn-244 is glycosylated (N-linked (GlcNAc...) asparagine). Asn-305 is a glycosylation site (N-linked (GlcNAc...) asparagine). The helical transmembrane segment at 543–563 (SVLCLIEFGEIIIDFVWITII) threads the bilayer. The Cytoplasmic segment spans residues 564-650 (KLVALAKSLR…IESDSEGDAI (87 aa)). A disordered region spans residues 600-650 (FQPDTAPRSPNTGPYPNEQALPIPGTPPPNYDSLRLQPLDVIESDSEGDAI). The PY motif; recruits WW domain-containing proteins and is thereby required for ubiquitination and inhibition of the channel by NEDD4 and NEDD4L motif lies at 626-630 (PPPNY). Over residues 641–650 (IESDSEGDAI) the composition is skewed to acidic residues. Ser-643 and Ser-645 each carry phosphoserine.

It belongs to the amiloride-sensitive sodium channel (TC 1.A.6) family. SCNN1B subfamily. As to quaternary structure, component of the heterotrimeric epithelial sodium channel (ENaC) composed of an alpha/SCNN1A, a beta/SCNN1B and a gamma/SCNN1G subunit. An additional delta/SCNN1D subunit can replace the alpha/SCNN1A subunit to form an alternative channel with specific properties. Interacts with WWP1 (via WW domains). Interacts with WWP2 (via WW domains); inhibits the channel. Interacts with the full-length immature form of PCSK9 (pro-PCSK9). Interacts (N-glycosylated) with BPIFA1; the interaction is direct and inhibits the proteolytic processing of SCNN1A and SCNN1G and the activation of ENaC. Post-translationally, ubiquitinated. Can be ubiquitinated at multiple sites and undergo monoubiquitination and polyubiquitination. Ubiquitination by NEDD4 or NEDD4L inhibits the ENaC channel through endocytosis, intracellular retention and degradation of its individual subunits. However, some studies could not confirm the ubiquitination of this subunit of the ENaC. Phosphorylated on serine and threonine residues. Aldosterone and insulin increase the basal level of phosphorylation. In terms of processing, N-glycosylated. N-glycosylation is required for interaction with BPIFA1.

It localises to the apical cell membrane. The protein resides in the cytoplasmic vesicle membrane. It catalyses the reaction Na(+)(in) = Na(+)(out). With respect to regulation, originally identified and characterized by its inhibition by the diuretic drug amiloride. In terms of biological role, this is one of the three pore-forming subunits of the heterotrimeric epithelial sodium channel (ENaC), a critical regulator of sodium balance and fluid homeostasis. ENaC operates in epithelial tissues, where it mediates the electrodiffusion of sodium ions from extracellular fluid through the apical membrane of cells, with water following osmotically. It plays a key role in maintaining sodium homeostasis through electrogenic sodium reabsorption in the kidneys. Additionally, ENaC is essential for airway surface liquid homeostasis, which is crucial for proper mucus clearance. This is Epithelial sodium channel subunit beta from Pan troglodytes (Chimpanzee).